A 408-amino-acid polypeptide reads, in one-letter code: Neutral cholesterol ester hydrolase 1 (408 aa).

The Cytoplasmic portion of the chain corresponds to 1–4 (MRSS). A helical; Signal-anchor for type II membrane protein membrane pass occupies residues 5–25 (CVLLTALLALAAYYIYIPLPS). Topologically, residues 26-408 (SVSDPWKLML…SYIKWLDQNL (383 aa)) are lumenal. The Involved in the stabilization of the negatively charged intermediate by the formation of the oxyanion hole signature appears at 113 to 115 (HGG). The active site involves serine 191. 2 N-linked (GlcNAc...) asparagine glycosylation sites follow: asparagine 270 and asparagine 287. Active-site residues include aspartate 348 and histidine 378. An N-linked (GlcNAc...) asparagine glycan is attached at asparagine 389.

The protein belongs to the 'GDXG' lipolytic enzyme family. N-glycosylated.

Its subcellular location is the cell membrane. It is found in the microsome. The catalysed reaction is a 1-O-alkyl-2-acetyl-sn-glycerol + H2O = a 1-O-alkyl-sn-glycerol + acetate + H(+). It carries out the reaction 1-O-hexadecyl-2-acetyl-sn-glycerol + H2O = 1-O-hexadecyl-sn-glycerol + acetate + H(+). It catalyses the reaction a cholesterol ester + H2O = cholesterol + a fatty acid + H(+). The enzyme catalyses cholesteryl (9Z-octadecenoate) + H2O = cholesterol + (9Z)-octadecenoate + H(+). Hydrolyzes 2-acetyl monoalkylglycerol ether (1-O-alkyl-2-acetyl-sn-glycerol), the penultimate precursor of the pathway for de novo synthesis of platelet-activating factor. May be responsible for the hydrolysis of cholesterol esters (such as cholesteryl (9Z-octadecenoate)) in macrophages. Also involved in organ detoxification by hydrolyzing exogenous organophosphorus compounds. This Bos taurus (Bovine) protein is Neutral cholesterol ester hydrolase 1 (NCEH1).